Consider the following 476-residue polypeptide: mRNA cap guanine-N(7) methyltransferase (476 aa).

Residues 1 to 14 are compositionally biased toward basic and acidic residues; sequence MANSTKAEEYEKMS. Positions 1–128 are disordered; that stretch reads MANSTKAEEY…TGDGTQNKRK (128 aa). The segment covering 20-50 has biased composition (polar residues); the sequence is ASVNSEAESSFSINENTTASGTGLSGKTSVC. Phosphoserine is present on residues serine 24, serine 28, and serine 29. Composition is skewed to basic and acidic residues over residues 54 to 68, 84 to 93, and 107 to 117; these read DTAR…DLVK, LDPEIVPEEK, and RETEDVPKDEY. Residue serine 118 is modified to Phosphoserine. The short motif at 126-128 is the Nuclear localization signal element; sequence KRK. Positions 167-475 constitute an mRNA cap 0 methyltransferase domain; sequence SRIFYLRNFN…IYLVFAFEKQ (309 aa). 176 to 177 is a binding site for mRNA; the sequence is NN. The S-adenosyl-L-methionine site is built by lysine 180, glycine 205, aspartate 227, aspartate 261, glutamine 284, and tyrosine 289.

It belongs to the class I-like SAM-binding methyltransferase superfamily. mRNA cap 0 methyltransferase family. As to quaternary structure, interacts with importin alpha, leading to stimulate both RNA-binding and methyltransferase activity. Interaction with importin alpha and beta is required for its nuclear localization, importin beta dissociating in response to RanGTP, allowing RNMT-importin alpha to bind RNA substrates. Interacts with elongating form of polymerase II and RNGTT. Interacts with RAMAC, this interaction significantly enhances RNA-binding and cap methyltransferase activity.

It localises to the nucleus. The catalysed reaction is a 5'-end (5'-triphosphoguanosine)-ribonucleoside in mRNA + S-adenosyl-L-methionine = a 5'-end (N(7)-methyl 5'-triphosphoguanosine)-ribonucleoside in mRNA + S-adenosyl-L-homocysteine. With respect to regulation, methyltransferase activity is activated by RAMAC. Its function is as follows. Catalytic subunit of the mRNA-capping methyltransferase RNMT:RAMAC complex that methylates the N7 position of the added guanosine to the 5'-cap structure of mRNAs. Binds RNA containing 5'-terminal GpppC. This is mRNA cap guanine-N(7) methyltransferase (RNMT) from Macaca fascicularis (Crab-eating macaque).